We begin with the raw amino-acid sequence, 359 residues long: 3-dehydroquinate synthase (359 aa).

NAD(+)-binding positions include 71 to 76 (DGEAYK), 105 to 109 (GVIGD), 129 to 130 (TT), lysine 142, lysine 151, and 169 to 172 (TLGT). Zn(2+) contacts are provided by glutamate 184, histidine 247, and histidine 264.

Belongs to the sugar phosphate cyclases superfamily. Dehydroquinate synthase family. Co(2+) is required as a cofactor. Zn(2+) serves as cofactor. It depends on NAD(+) as a cofactor.

It localises to the cytoplasm. It catalyses the reaction 7-phospho-2-dehydro-3-deoxy-D-arabino-heptonate = 3-dehydroquinate + phosphate. Its pathway is metabolic intermediate biosynthesis; chorismate biosynthesis; chorismate from D-erythrose 4-phosphate and phosphoenolpyruvate: step 2/7. Catalyzes the conversion of 3-deoxy-D-arabino-heptulosonate 7-phosphate (DAHP) to dehydroquinate (DHQ). This is 3-dehydroquinate synthase from Thiobacillus denitrificans (strain ATCC 25259 / T1).